Here is a 162-residue protein sequence, read N- to C-terminus: B-box zinc finger protein 23 (162 aa).

Residues Cys-5, Cys-8, Cys-28, His-33, Cys-63, Cys-66, Cys-86, and His-91 each coordinate Zn(2+). A B box-type 1; atypical zinc finger spans residues 5-47; that stretch reads CEVCEKAEAEVLCCSDEAVLCKPCDIKVHEANKLFQRHHRVAL. The B box-type 2; atypical zinc-finger motif lies at 63-101; the sequence is CDICQERKGYFFCLEDRAMLCNDCDEAIHTCNSHQRFLL. The disordered stretch occupies residues 137–162; sequence QYSSEETEAGNSGEIVHKNPSVILSP.

The protein localises to the nucleus. Its function is as follows. Probable transcription factor that may be involved in seedling photomorphogenesis. The polypeptide is B-box zinc finger protein 23 (Arabidopsis thaliana (Mouse-ear cress)).